Reading from the N-terminus, the 358-residue chain is uncharacterized protein (358 aa).

Zn(2+)-binding residues include Cys-39, His-61, Cys-92, Cys-95, Cys-98, Cys-106, and Asp-157.

Belongs to the zinc-containing alcohol dehydrogenase family. Zn(2+) serves as cofactor.

This is an uncharacterized protein from Escherichia coli (strain K12).